Reading from the N-terminus, the 617-residue chain is UvrABC system protein C (617 aa).

In terms of domain architecture, GIY-YIG spans 11–85 (TTPGVYIFRK…IKQHRPHYNV (75 aa)). The region spanning 194 to 229 (APVIARLKEDMKVAAQGQDFEQAARLRDRVQAVEKL) is the UVR domain.

It belongs to the UvrC family. As to quaternary structure, interacts with UvrB in an incision complex.

It is found in the cytoplasm. Its function is as follows. The UvrABC repair system catalyzes the recognition and processing of DNA lesions. UvrC both incises the 5' and 3' sides of the lesion. The N-terminal half is responsible for the 3' incision and the C-terminal half is responsible for the 5' incision. In Deinococcus radiodurans (strain ATCC 13939 / DSM 20539 / JCM 16871 / CCUG 27074 / LMG 4051 / NBRC 15346 / NCIMB 9279 / VKM B-1422 / R1), this protein is UvrABC system protein C.